The sequence spans 79 residues: Small cysteine-rich protein 2 (79 aa).

Positions 1–21 (MRSQHVLILLLGLVCASQVLG) are cleaved as a signal peptide. Residues 22-35 (KHLTKVKAKALHYD) constitute a propeptide that is removed on maturation.

This sequence belongs to the Cnidaria small cysteine-rich protein (SCRiP) family. delta subfamily. Post-translationally, contains 4 disulfide bonds.

The protein localises to the secreted. Its subcellular location is the nematocyst. Its function is as follows. This recombinant protein induces severe neurotoxicity on zebrafish larvae (Danio rerio) at a concentration of 230 mg/ml, but does not show toxicity when injected in blowfly larvae (Sarcophaga falculata). All fish incubated with this protein died within 200 minutes of exposure. Has also been claimed to be implied in calcification, but this function seems improbable. The chain is Small cysteine-rich protein 2 from Acropora millepora (Staghorn coral).